The chain runs to 297 residues: MLRLGSHVSMSGKKMLLGASEEAASYGSNTFMIYTGAPQNTRRKPIEELNIEAGLEHMKAHDMADIVVHAPYIINIGNSVKPETFELGVNFLQSEIERTRALGAKQIVLHPGAHVGEGADKGIKQIIQGLNEALIHDQDVQIALETMAGKGSECGRTFEEIAQIIDGVTHNELLSVTFDTCHTHDAGYDIVNDFDGVLNEFDKIIGVDRLKVLHINDSKNERGAHKDRHANIGFGHIGFDALHYIVHHPQLADVPKILETPYVGEDKASKKAPYKWEIAMLRNGEFDPDLLNKIQNS.

9 residues coordinate Zn(2+): H69, H110, E145, D179, H182, H214, D227, H229, and E259.

Belongs to the AP endonuclease 2 family. Zn(2+) serves as cofactor.

The enzyme catalyses Endonucleolytic cleavage to 5'-phosphooligonucleotide end-products.. Endonuclease IV plays a role in DNA repair. It cleaves phosphodiester bonds at apurinic or apyrimidinic (AP) sites, generating a 3'-hydroxyl group and a 5'-terminal sugar phosphate. The chain is Probable endonuclease 4 from Listeria monocytogenes serotype 4b (strain F2365).